Consider the following 134-residue polypeptide: uncharacterized protein (134 aa).

3 helical membrane passes run P9–A29, M49–F69, and A107–L127.

Belongs to the DoxX family.

The protein localises to the cell membrane. This is an uncharacterized protein from Haemophilus influenzae (strain ATCC 51907 / DSM 11121 / KW20 / Rd).